A 297-amino-acid chain; its full sequence is Lysenin (297 aa).

An N-terminal cap domain region spans residues 10–33 (EQIEVDVVAVWKEGYVYENRGSTS). Positions 34–107 (VDQKITITKG…SKVIEHTITI (74 aa)) are beta-hairpin domain. The segment at 108–156 (PPTSKFTRWQLNADVGGADIEYMYLIDEVTPIGGTQSIPQVITSRAKII) is N-terminal cap domain. The C-terminal receptor-binding domain stretch occupies residues 157 to 297 (VGRQIILGKT…EDKWILEVVG (141 aa)). An N-(acyl)-sphingosylphosphocholine-binding residues include Lys-185, Ser-227, Tyr-233, and Tyr-282. Residues Cys-272 and Cys-283 are joined by a disulfide bond.

It belongs to the lysenin family. In terms of assembly, binds to sphingomyelin as a monomer by using its C-terminal domain. Forms a nonamer when sphingomyelin/lysenin ratio is lower than ca 500. Oligomerization, but not binding, is influenced by the fluidity of sphingomyelin. In terms of tissue distribution, expressed by coelomocytes.

Its subcellular location is the secreted. The protein localises to the target cell membrane. Pore-forming toxin that defensively acts against parasitic microorganisms by forming pores in sphingomyelin-containing membranes. Has hemolytic activity and is also cytotoxic to spermatozoa of some species of invertebrates and many species of vertebrates and to amphibian larvae, guinea pig polymorphonuclear leukocytes, chicken fibroblasts, normal spleen cells and various tumor cells. Is lethal for various species of reptiles, amphibian, birds and mammals. Induces smooth muscle contraction. It binds sphingomyelin and induces hemolysis in the same manner as lysenin-related protein 2, and is 10-fold more effective than lysenin-related protein 1. The protein is Lysenin of Eisenia fetida (Red wiggler worm).